Here is a 384-residue protein sequence, read N- to C-terminus: Carbamoyl phosphate synthase small chain (384 aa).

Residues 1–192 (MIKKIPAILV…LADRNREKIY (192 aa)) form a CPSase region. L-glutamine-binding residues include S51, G244, and G246. Residues 196–382 (KVIVIDFGVK…IEIMKQFRKE (187 aa)) form the Glutamine amidotransferase type-1 domain. C272 acts as the Nucleophile in catalysis. 5 residues coordinate L-glutamine: M273, Q276, N312, G314, and F315. Catalysis depends on residues H355 and E357.

Belongs to the CarA family. Composed of two chains; the small (or glutamine) chain promotes the hydrolysis of glutamine to ammonia, which is used by the large (or ammonia) chain to synthesize carbamoyl phosphate. Tetramer of heterodimers (alpha,beta)4.

It localises to the plastid. Its subcellular location is the chloroplast. It carries out the reaction hydrogencarbonate + L-glutamine + 2 ATP + H2O = carbamoyl phosphate + L-glutamate + 2 ADP + phosphate + 2 H(+). The catalysed reaction is L-glutamine + H2O = L-glutamate + NH4(+). It participates in amino-acid biosynthesis; L-arginine biosynthesis; carbamoyl phosphate from bicarbonate: step 1/1. The protein operates within pyrimidine metabolism; UMP biosynthesis via de novo pathway; (S)-dihydroorotate from bicarbonate: step 1/3. Functionally, small subunit of the glutamine-dependent carbamoyl phosphate synthetase (CPSase). CPSase catalyzes the formation of carbamoyl phosphate from the ammonia moiety of glutamine, carbonate, and phosphate donated by ATP, constituting the first step of 2 biosynthetic pathways, one leading to arginine and/or urea and the other to pyrimidine nucleotides. The small subunit (glutamine amidotransferase) binds and cleaves glutamine to supply the large subunit with the substrate ammonia. This chain is Carbamoyl phosphate synthase small chain, found in Porphyra purpurea (Red seaweed).